The following is a 385-amino-acid chain: DNA double-strand break repair protein Mre11 (385 aa).

Residues Asp-14, His-16, and Asp-58 each contribute to the Mn(2+) site. The Proton donor role is filled by His-94. Mn(2+) is bound by residues His-180, His-216, and His-218.

The protein belongs to the MRE11/RAD32 family. As to quaternary structure, homodimer. Forms a heterotetramer composed of two Mre11 subunits and two Rad50 subunits. Homodimerization facilitates DNA binding. The cofactor is Mn(2+).

With respect to regulation, nuclease activity is regulated by Rad50. The mirin-derivative PFM39, specifically inhibits the 3'-5' exonuclease activity. The N-alkylated mirin-derivatives PFM03 and PFM01 specifically inhibit the endonuclease activity. In terms of biological role, part of the Rad50/Mre11 complex, which is involved in the early steps of DNA double-strand break (DSB) repair. The complex may facilitate opening of the processed DNA ends to aid in the recruitment of HerA and NurA. Mre11 binds to DSB ends and has both double-stranded 3'-5' exonuclease activity and single-stranded endonuclease activity. This Thermotoga maritima (strain ATCC 43589 / DSM 3109 / JCM 10099 / NBRC 100826 / MSB8) protein is DNA double-strand break repair protein Mre11.